A 222-amino-acid chain; its full sequence is MKILIVEDDTLLLQGLILAAQTEGYACDSVTTARMAEQSLEAGHYSLVVLDLGLPDEDGLHFLARIRQKKYTLPVLILTARDTLTDKIAGLDVGADDYLVKPFALEELHARIRALLRRHNNQGESELIVGNLTLNMGRRQVWMGGEELILTPKEYALLSRLMLKAGSPVHREILYNDIYNWDNEPSTNTLEVHIHNLRDKVGKARIRTVRGFGYMLVANEEN.

The region spanning 2–116 (KILIVEDDTL…ELHARIRALL (115 aa)) is the Response regulatory domain. Aspartate 51 bears the 4-aspartylphosphate mark. Residues 124-218 (ESELIVGNLT…VRGFGYMLVA (95 aa)) constitute a DNA-binding region (ompR/PhoB-type).

In terms of assembly, homodimer. In terms of processing, phosphorylated by BasS.

It localises to the cytoplasm. Member of the two-component regulatory system BasS/BasR. BasR induces the transcription of the ugd, ais, arnBCADTEF and eptA-basRS loci, all involved in resistance to polymyxin. The sequence is that of Transcriptional regulatory protein BasR (basR) from Escherichia coli (strain K12).